A 149-amino-acid chain; its full sequence is Large ribosomal subunit protein uL15 (149 aa).

Residues 1–29 (MVSHLKKTRKLRGHVSHGHGRVGKHRKGG) show a composition bias toward basic residues. The interval 1–38 (MVSHLKKTRKLRGHVSHGHGRVGKHRKGGCRGGRGKAG) is disordered.

Belongs to the universal ribosomal protein uL15 family.

This is Large ribosomal subunit protein uL15 (RPL27A) from Tetrahymena thermophila.